Here is a 200-residue protein sequence, read N- to C-terminus: Imidazoleglycerol-phosphate dehydratase (200 aa).

It belongs to the imidazoleglycerol-phosphate dehydratase family.

The protein localises to the cytoplasm. It catalyses the reaction D-erythro-1-(imidazol-4-yl)glycerol 3-phosphate = 3-(imidazol-4-yl)-2-oxopropyl phosphate + H2O. Its pathway is amino-acid biosynthesis; L-histidine biosynthesis; L-histidine from 5-phospho-alpha-D-ribose 1-diphosphate: step 6/9. The sequence is that of Imidazoleglycerol-phosphate dehydratase from Chlorobium phaeobacteroides (strain BS1).